Reading from the N-terminus, the 256-residue chain is MGDKRGLVLDETATYGTVDRLTGWFRNVCIQLPEGTLLVLCCCAVEQRIGVTTFSIGLSYDLLTGLDPSNPDTVQSPWILTLQVDQKEEYPKGLLLRIPTKQTLKDYWIHQLKEACVSRDGNANRVMSLSNANSQKMWDSLVSHDFKTFWSIMTTILPREKDSGAIRSLPIKVYLPMSNQCIAAIVKPETDDGKLTTIGQSLHSHLPTFFPSETKPVVARAVVHGVEVPLNAVLANLYYMAMYPDGFLHISLVMIN.

Lys-113 participates in a covalent cross-link: Glycyl lysine isopeptide (Lys-Gly) (interchain with G-Cter in ATG12).

It belongs to the ATG5 family. In terms of assembly, conjugated with ATG12. Post-translationally, conjugated to ATG12; which is essential for autophagy.

The protein localises to the preautophagosomal structure membrane. Functionally, involved in cytoplasm to vacuole transport (Cvt) and autophagic vesicle formation. Autophagy is essential for maintenance of amino acid levels and protein synthesis under nitrogen starvation. Required for selective autophagic degradation of the nucleus (nucleophagy). Also required for mitophagy, which eliminates defective or superfluous mitochondria in order to fulfill cellular energy requirements and prevent excess ROS production. Conjugation with ATG12, through a ubiquitin-like conjugating system involving ATG7 as an E1-like activating enzyme and ATG10 as an E2-like conjugating enzyme, is essential for its function. The ATG12-ATG5 conjugate acts as an E3-like enzyme which is required for lipidation of ATG8 and ATG8 association to the vesicle membranes. In Yarrowia lipolytica (strain CLIB 122 / E 150) (Yeast), this protein is Autophagy protein 5 (ATG5).